The following is a 170-amino-acid chain: Fimbrial protein (170 aa).

A propeptide spanning residues 1-7 (MNTLQKG) is cleaved from the precursor. F8 bears the N-methylphenylalanine mark. Residues 8 to 28 (FTLIELMIVIAIVGILAAVAL) form a helical membrane-spanning segment. O-linked (Gal...) serine glycosylation is present at S70. Position 100 is an O-(sn-1-glycerophosphoryl)serine (S100). C127 and C163 are oxidised to a cystine.

This sequence belongs to the N-Me-Phe pilin family. In terms of assembly, the pili are polar flexible filaments of about 5.4 nanometers diameter and 2.5 micrometers average length; they consist of only a single polypeptide chain arranged in a helical configuration of five subunits per turn in the assembled pilus. O-linked glycan consists of GlcNAc-Gal disaccharide.

It localises to the fimbrium. The protein localises to the membrane. In terms of biological role, major component of the type IV pilus (T4P) that plays a role in cellular adherence, microcolony formation as well as twitching motility. The sequence is that of Fimbrial protein (pilE) from Neisseria meningitidis serogroup A / serotype 4A (strain DSM 15465 / Z2491).